The sequence spans 455 residues: Bifunctional protein GlmU (455 aa).

Residues 1–232 form a pyrophosphorylase region; it reads MASITGALIL…DPNLLGVNDP (232 aa). UDP-N-acetyl-alpha-D-glucosamine-binding positions include 10 to 13, Lys-24, Gln-75, and 80 to 81; these read LAAG and GT. Residue Asp-106 coordinates Mg(2+). UDP-N-acetyl-alpha-D-glucosamine-binding residues include Gly-141, Glu-155, Asn-172, and Asn-230. Asn-230 is a Mg(2+) binding site. Positions 233–253 are linker; the sequence is AELIRSEALVRARIALNWIEK. The tract at residues 254–455 is N-acetyltransferase; that stretch reads RVLIHAPETV…QTTLPRRRNS (202 aa). Residues Arg-336 and Lys-354 each coordinate UDP-N-acetyl-alpha-D-glucosamine. His-366 (proton acceptor) is an active-site residue. 2 residues coordinate UDP-N-acetyl-alpha-D-glucosamine: Tyr-369 and Asn-380. Acetyl-CoA is bound by residues Ala-383, 389–390, Ser-408, Ala-426, and Arg-443; that span reads NY.

The protein in the N-terminal section; belongs to the N-acetylglucosamine-1-phosphate uridyltransferase family. It in the C-terminal section; belongs to the transferase hexapeptide repeat family. As to quaternary structure, homotrimer. It depends on Mg(2+) as a cofactor.

It is found in the cytoplasm. The catalysed reaction is alpha-D-glucosamine 1-phosphate + acetyl-CoA = N-acetyl-alpha-D-glucosamine 1-phosphate + CoA + H(+). It carries out the reaction N-acetyl-alpha-D-glucosamine 1-phosphate + UTP + H(+) = UDP-N-acetyl-alpha-D-glucosamine + diphosphate. Its pathway is nucleotide-sugar biosynthesis; UDP-N-acetyl-alpha-D-glucosamine biosynthesis; N-acetyl-alpha-D-glucosamine 1-phosphate from alpha-D-glucosamine 6-phosphate (route II): step 2/2. It functions in the pathway nucleotide-sugar biosynthesis; UDP-N-acetyl-alpha-D-glucosamine biosynthesis; UDP-N-acetyl-alpha-D-glucosamine from N-acetyl-alpha-D-glucosamine 1-phosphate: step 1/1. It participates in bacterial outer membrane biogenesis; LPS lipid A biosynthesis. Catalyzes the last two sequential reactions in the de novo biosynthetic pathway for UDP-N-acetylglucosamine (UDP-GlcNAc). The C-terminal domain catalyzes the transfer of acetyl group from acetyl coenzyme A to glucosamine-1-phosphate (GlcN-1-P) to produce N-acetylglucosamine-1-phosphate (GlcNAc-1-P), which is converted into UDP-GlcNAc by the transfer of uridine 5-monophosphate (from uridine 5-triphosphate), a reaction catalyzed by the N-terminal domain. The polypeptide is Bifunctional protein GlmU (Nitratidesulfovibrio vulgaris (strain DSM 19637 / Miyazaki F) (Desulfovibrio vulgaris)).